Consider the following 91-residue polypeptide: Large ribosomal subunit protein uL23 (91 aa).

The protein belongs to the universal ribosomal protein uL23 family. Part of the 50S ribosomal subunit. Contacts protein L29, and trigger factor when it is bound to the ribosome.

One of the early assembly proteins it binds 23S rRNA. One of the proteins that surrounds the polypeptide exit tunnel on the outside of the ribosome. Forms the main docking site for trigger factor binding to the ribosome. This chain is Large ribosomal subunit protein uL23, found in Staphylococcus epidermidis (strain ATCC 35984 / DSM 28319 / BCRC 17069 / CCUG 31568 / BM 3577 / RP62A).